Reading from the N-terminus, the 416-residue chain is NADH-quinone oxidoreductase subunit D (416 aa).

This sequence belongs to the complex I 49 kDa subunit family. NDH-1 is composed of 14 different subunits. Subunits NuoB, C, D, E, F, and G constitute the peripheral sector of the complex.

It is found in the cell inner membrane. It catalyses the reaction a quinone + NADH + 5 H(+)(in) = a quinol + NAD(+) + 4 H(+)(out). In terms of biological role, NDH-1 shuttles electrons from NADH, via FMN and iron-sulfur (Fe-S) centers, to quinones in the respiratory chain. The immediate electron acceptor for the enzyme in this species is believed to be ubiquinone. Couples the redox reaction to proton translocation (for every two electrons transferred, four hydrogen ions are translocated across the cytoplasmic membrane), and thus conserves the redox energy in a proton gradient. In Caulobacter sp. (strain K31), this protein is NADH-quinone oxidoreductase subunit D.